A 691-amino-acid polypeptide reads, in one-letter code: Elongation factor G 2 (691 aa).

The 280-residue stretch at 8–287 (DRYRNIGIMA…AVVDYLPSPL (280 aa)) folds into the tr-type G domain. Residues 17-24 (AHIDAGKT), 85-89 (DTPGH), and 139-142 (NKMD) contribute to the GTP site.

It belongs to the TRAFAC class translation factor GTPase superfamily. Classic translation factor GTPase family. EF-G/EF-2 subfamily.

The protein resides in the cytoplasm. Catalyzes the GTP-dependent ribosomal translocation step during translation elongation. During this step, the ribosome changes from the pre-translocational (PRE) to the post-translocational (POST) state as the newly formed A-site-bound peptidyl-tRNA and P-site-bound deacylated tRNA move to the P and E sites, respectively. Catalyzes the coordinated movement of the two tRNA molecules, the mRNA and conformational changes in the ribosome. The protein is Elongation factor G 2 of Myxococcus xanthus (strain DK1622).